We begin with the raw amino-acid sequence, 240 residues long: UDP-2,3-diacylglucosamine hydrolase (240 aa).

Mn(2+) contacts are provided by D7, H9, D40, N78, and H113. N78–R79 lines the substrate pocket. Residues D121, S159, T163, K166, and H194 each contribute to the substrate site. Residues H194 and H196 each coordinate Mn(2+).

This sequence belongs to the LpxH family. Mn(2+) serves as cofactor.

It is found in the cell inner membrane. It catalyses the reaction UDP-2-N,3-O-bis[(3R)-3-hydroxytetradecanoyl]-alpha-D-glucosamine + H2O = 2-N,3-O-bis[(3R)-3-hydroxytetradecanoyl]-alpha-D-glucosaminyl 1-phosphate + UMP + 2 H(+). Its pathway is glycolipid biosynthesis; lipid IV(A) biosynthesis; lipid IV(A) from (3R)-3-hydroxytetradecanoyl-[acyl-carrier-protein] and UDP-N-acetyl-alpha-D-glucosamine: step 4/6. Hydrolyzes the pyrophosphate bond of UDP-2,3-diacylglucosamine to yield 2,3-diacylglucosamine 1-phosphate (lipid X) and UMP by catalyzing the attack of water at the alpha-P atom. Involved in the biosynthesis of lipid A, a phosphorylated glycolipid that anchors the lipopolysaccharide to the outer membrane of the cell. The polypeptide is UDP-2,3-diacylglucosamine hydrolase (Stutzerimonas stutzeri (strain A1501) (Pseudomonas stutzeri)).